Here is a 378-residue protein sequence, read N- to C-terminus: Ribosomal RNA large subunit methyltransferase G (378 aa).

The protein belongs to the methyltransferase superfamily. RlmG family.

It localises to the cytoplasm. The catalysed reaction is guanosine(1835) in 23S rRNA + S-adenosyl-L-methionine = N(2)-methylguanosine(1835) in 23S rRNA + S-adenosyl-L-homocysteine + H(+). Specifically methylates the guanine in position 1835 (m2G1835) of 23S rRNA. In Escherichia coli O6:K15:H31 (strain 536 / UPEC), this protein is Ribosomal RNA large subunit methyltransferase G.